The primary structure comprises 342 residues: MNTADFDFDLPEELIAQTPLEKRDASRLLVVDKETGAFSDQHFDQIIDQLQPGDALVMNNTRVLPARLYGIKPETGGHVELLLLKNTQGDDWEVLAKPAKRLRVGAQISFGDGRLTATVIEELEHGGRIVRFSYEGIFLEVLESLGEMPLPPYIHEKLADRERYQTVYAKENGSAAAPTAGLHFTEELLEQIAAKGVKLVYLTLHVGLGTFRPVSVDSLDDHEMHSEFYSLSEEAAQTLRQVKANGGRVIAVGTTSIRTLETIGSKFQGQIQADSGWTNIFIKPGYNWKVVDAFSTNFHLPKSTLVMLVSAFAGRSLTLEAYEHAIAERYRFFSFGDAMFIK.

Belongs to the QueA family. As to quaternary structure, monomer.

It is found in the cytoplasm. It carries out the reaction 7-aminomethyl-7-carbaguanosine(34) in tRNA + S-adenosyl-L-methionine = epoxyqueuosine(34) in tRNA + adenine + L-methionine + 2 H(+). The protein operates within tRNA modification; tRNA-queuosine biosynthesis. Its function is as follows. Transfers and isomerizes the ribose moiety from AdoMet to the 7-aminomethyl group of 7-deazaguanine (preQ1-tRNA) to give epoxyqueuosine (oQ-tRNA). In Streptococcus sanguinis (strain SK36), this protein is S-adenosylmethionine:tRNA ribosyltransferase-isomerase.